Here is a 207-residue protein sequence, read N- to C-terminus: Peptidyl-tRNA hydrolase (207 aa).

Tyrosine 14 is a tRNA binding site. Residue histidine 19 is the Proton acceptor of the active site. 3 residues coordinate tRNA: tyrosine 64, asparagine 66, and asparagine 112.

It belongs to the PTH family. As to quaternary structure, monomer.

It localises to the cytoplasm. The enzyme catalyses an N-acyl-L-alpha-aminoacyl-tRNA + H2O = an N-acyl-L-amino acid + a tRNA + H(+). Functionally, hydrolyzes ribosome-free peptidyl-tRNAs (with 1 or more amino acids incorporated), which drop off the ribosome during protein synthesis, or as a result of ribosome stalling. In terms of biological role, catalyzes the release of premature peptidyl moieties from peptidyl-tRNA molecules trapped in stalled 50S ribosomal subunits, and thus maintains levels of free tRNAs and 50S ribosomes. The protein is Peptidyl-tRNA hydrolase of Rhodopseudomonas palustris (strain HaA2).